The following is a 1198-amino-acid chain: MAEHPPLLDTTQILSSDISLLSAPIVSADGTQQVILVQVNPGEAFTIRREDGQFQCITGPAQVPMMSPNGSVPPIYVPPGYAPQVIEDNGVRRVVVVPQAPEFHPGSHTVLHRSPHPPLPGFIPVPTMMPPPPRHMYSPVTGAGDMTTQYMPQYQSSQVYGDVDAHSTHGRSNFRDERSSKTYERLQKKLKDRQGTQKDKMSSPPSSPQKCPSPINEHNGLIKGQIAGGINTGSAKIKSGKGKGGTQVDTEIEEKDEETKAFEALLSNIVKPVASDIQARTVVLTWSPPSSLINGETDESSVPELYGYEVLISSTGKDGKYKSVYVGEETNITLNDLKPAMDYHAKVQAEYNSIKGTPSEAEIFTTLSCEPDIPNPPRIANRTKNSLTLQWKAPSDNGSKIQNFVLEWDEGKGNGEFCQCYMGSQKQFKITKLSPAMGCKFRLSARNDYGTSGFSEEVLYYTSGCAPSMPASPVLTKAGITWLSLQWSKPSGTPSDEGISYILEMEEETSGYGFKPKYDGEDLAYTVKNLRRSTKYKFKVIAYNSEGKSNPSEVVEFTTCPDKPGIPVKPSVKGKIHSHSFKITWDPPKDNGGATINKYVVEMAEGSNGNKWEMIYSGATREHLCDRLNPGCFYRLRVYCISDGGQSAVSESLLVQTPAVPPGPCLPPRLQGRPKAKEIQLRWGPPLVDGGSPISCYSVEMSPIEKDEPREVYQGSEVECTVSSLLPGKTYSFRLRAANKMGFGPFSEKCDITTAPGPPDQCKPPQVTCRSATCAQVNWEVPLSNGTDVTEYRLEWGGVEGSMQICYCGPGLSYEIKGLSPATTYYCRVQALSVVGAGPFSEVVACVTPPSVPGIVTCLQEISDDEIENPHYSPSTCLAISWEKPCDHGSEILAYSIDFGDKQSLTVGKVTSYIINNLQPDTTYRIRIQALNSLGAGPFSHMIKLKTKPLPPDPPRLECVAFSHQNLKLKWGEGTPKTLSTDSIQYHLQMEDKNGRFVSLYRGPCHTYKVQRLNESTSYKFCIQACNEAGEGPLSQEYIFTTPKSVPAALKAPKIEKVNDHICEITWECLQPMKGDPVIYSLQVMLGKDSEFKQIYKGPDSSFRYSSLQLNCEYRFRVCAIRQCQDSLGHQDLVGPYSTTVLFISQRTEPPASTNRDTVESTRTRRALSDEQCAAVILVLFAFFSILIAFIIQYFVIK.

The tract at residues 160–221 (YGDVDAHSTH…PSPINEHNGL (62 aa)) is disordered. The span at 163–201 (VDAHSTHGRSNFRDERSSKTYERLQKKLKDRQGTQKDKM) shows a compositional bias: basic and acidic residues. The segment covering 202–214 (SSPPSSPQKCPSP) has biased composition (low complexity). Serine 203, serine 207, and serine 213 each carry phosphoserine. Fibronectin type-III domains follow at residues 268–369 (NIVK…TLSC), 373–465 (IPNP…TSGC), 469–562 (MPAS…TCPD), 566–660 (IPVK…TPAV), 664–757 (PCLP…TAPG), 761–851 (QCKP…TPPS), 861–950 (EISD…TKPL), 951–1045 (PPDP…TPKS), and 1046–1151 (VPAA…TEPP). N6-acetyllysine is present on lysine 384. Residues 1177-1197 (ILVLFAFFSILIAFIIQYFVI) form a helical membrane-spanning segment.

This sequence belongs to the FNDC3 family. As to expression, expressed in the odontoblast and nerves in the dental pulp. Also expressed in trachea and to a lesser extent in the brain, liver, lung and kidney.

The protein resides in the golgi apparatus membrane. Mediates spermatid-Sertoli adhesion during spermatogenesis. The protein is Fibronectin type-III domain-containing protein 3A (FNDC3A) of Homo sapiens (Human).